The chain runs to 242 residues: Segregation and condensation protein A (242 aa).

The protein belongs to the ScpA family. Component of a cohesin-like complex composed of ScpA, ScpB and the Smc homodimer, in which ScpA and ScpB bind to the head domain of Smc. The presence of the three proteins is required for the association of the complex with DNA.

Its subcellular location is the cytoplasm. Its function is as follows. Participates in chromosomal partition during cell division. May act via the formation of a condensin-like complex containing Smc and ScpB that pull DNA away from mid-cell into both cell halves. In Streptococcus pneumoniae serotype 4 (strain ATCC BAA-334 / TIGR4), this protein is Segregation and condensation protein A.